Reading from the N-terminus, the 168-residue chain is uncharacterized protein (168 aa).

Residues 1 to 10 show a composition bias toward pro residues; sequence MSPTTGPQPN. Disordered stretches follow at residues 1–23 and 117–143; these read MSPT…TGPQ and EPGN…RGPQ.

This is an uncharacterized protein from Homo sapiens (Human).